The sequence spans 146 residues: Leghemoglobin Lb120-29 (146 aa).

The Globin domain maps to 2-146; it reads GFTDKQEALV…LASAIKKAMS (145 aa). Nitrated tyrosine occurs at positions 24 and 29. Heme b is bound at residue S44. S44 carries the post-translational modification Phosphoserine. H61 is a binding site for O2. 3 residues coordinate heme b: K64, H93, and K96. The residue at position 134 (Y134) is a Nitrated tyrosine.

This sequence belongs to the plant globin family. In terms of assembly, monomer. In terms of processing, nitrated in effective nodules and particularly in hypoxic conditions; this mechanism may play a protective role in the symbiosis by buffering toxic peroxynitrite NO(2)(-). Nitration level decrease during nodule senescence. Phosphorylation at Ser-44 disrupts the molecular environment of its porphyrin ring oxygen binding pocket, thus leading to a reduced oxygen consumption and to the delivery of oxygen O(2) to symbiosomes. As to expression, root nodules.

It localises to the cytoplasm. Its subcellular location is the cytosol. The protein localises to the nucleus. In terms of biological role, leghemoglobin that reversibly binds oxygen O(2) through a pentacoordinated heme iron. In root nodules, facilitates the diffusion of oxygen to the bacteroids while preventing the bacterial nitrogenase from being inactivated by buffering dioxygen, nitric oxide and carbon monoxide, and promoting the formation of reactive oxygen species (ROS, e.g. H(2)O(2)). This role is essential for symbiotic nitrogen fixation (SNF). This is Leghemoglobin Lb120-29 from Pisum sativum (Garden pea).